A 325-amino-acid polypeptide reads, in one-letter code: L-lactate dehydrogenase (325 aa).

Residues Val19, Asp40, Lys45, Tyr70, and 84 to 85 contribute to the NAD(+) site; that span reads GA. Substrate-binding residues include Gln87 and Arg93. NAD(+)-binding positions include Thr106, 123-125, and Ser148; that span reads AAN. 125 to 128 contributes to the substrate binding site; that stretch reads NPVD. 153 to 156 is a substrate binding site; sequence DSAR. Arg158 and His173 together coordinate beta-D-fructose 1,6-bisphosphate. The active-site Proton acceptor is the His180. The residue at position 225 (Tyr225) is a Phosphotyrosine. A substrate-binding site is contributed by Thr234.

The protein belongs to the LDH/MDH superfamily. LDH family. As to quaternary structure, homotetramer.

Its subcellular location is the cytoplasm. It carries out the reaction (S)-lactate + NAD(+) = pyruvate + NADH + H(+). The protein operates within fermentation; pyruvate fermentation to lactate; (S)-lactate from pyruvate: step 1/1. With respect to regulation, allosterically activated by fructose 1,6-bisphosphate (FBP). In terms of biological role, catalyzes the conversion of lactate to pyruvate. The chain is L-lactate dehydrogenase from Latilactobacillus sakei (Lactobacillus sakei).